Here is an 81-residue protein sequence, read N- to C-terminus: Adipogenin (81 aa).

Residues 16-36 (FLVFWLCLPVALLLFLLIIWL) form a helical membrane-spanning segment.

The protein belongs to the adipogenin family. Highly expressed in subcutaneous, perirenal and mesecentric adipose tissue.

The protein resides in the membrane. Its subcellular location is the nucleus. Functionally, plays a role in stimulating adipocyte differentiation and development. In Bos taurus (Bovine), this protein is Adipogenin.